Reading from the N-terminus, the 502-residue chain is Probable malate:quinone oxidoreductase (502 aa).

The protein belongs to the MQO family. Requires FAD as cofactor.

The enzyme catalyses (S)-malate + a quinone = a quinol + oxaloacetate. It participates in carbohydrate metabolism; tricarboxylic acid cycle; oxaloacetate from (S)-malate (quinone route): step 1/1. The protein is Probable malate:quinone oxidoreductase of Synechococcus sp. (strain CC9902).